A 453-amino-acid chain; its full sequence is Odorant receptor 83a (453 aa).

Topologically, residues 1-28 (MKSTFKEERIKDDSKRRDLFVFVRQTMC) are cytoplasmic. The helical transmembrane segment at 29-49 (IAAMYPFGYYVNGSGVLAVLV) threads the bilayer. Topologically, residues 50 to 85 (RFCDLTYELFNYFVSVHIAGLYICTIYINYGQGDLD) are extracellular. A helical transmembrane segment spans residues 86-106 (FFVNCLIQTIIYLWTIAMKLY). Residues 107–148 (FRRFRPGLLNTILSNINDEYETRSAVGFSFVTMAGSYRMSKL) lie on the Cytoplasmic side of the membrane. Residues 149-169 (WIKTYVYCCYIGTIFWLALPI) traverse the membrane as a helical segment. Residues 170-203 (AYRDRSLPLACWYPFDYTQPGVYEVVFLLQAMGQ) lie on the Extracellular side of the membrane. Residues 204–224 (IQVAASFASSSGLHMVLCVLI) form a helical membrane-spanning segment. Over 225 to 322 (SGQYDVLFCS…ALKKIESFYS (98 aa)) the chain is Cytoplasmic. Residues 323–343 (PIWFVKIGEVTFLMCLVAFVS) form a helical membrane-spanning segment. Residues 344–359 (TKSTAANSFMRMVSLG) are Extracellular-facing. The chain crosses the membrane as a helical span at residues 360–380 (QYLLLVLYELFIICYFADIVF). Over 381–408 (QNSQRCGEALWRSPWQRHLKDVRSDYMF) the chain is Cytoplasmic. The chain crosses the membrane as a helical span at residues 409–429 (FMLNSRRQFQLTAGKISNLNV). Residues 430–453 (DRFRGTITTAFSFLTLLQKMDARE) are Extracellular-facing.

It belongs to the insect chemoreceptor superfamily. Heteromeric odorant receptor channel (TC 1.A.69) family. Or2a subfamily. As to quaternary structure, interacts with Orco. Complexes exist early in the endomembrane system in olfactory sensory neurons (OSNs), coupling these complexes to the conserved ciliary trafficking pathway.

Its subcellular location is the cell membrane. Functionally, odorant receptor which mediates acceptance or avoidance behavior, depending on its substrates. The odorant receptor repertoire encodes a large collection of odor stimuli that vary widely in identity, intensity, and duration. May form a complex with Orco to form odorant-sensing units, providing sensitive and prolonged odorant signaling and calcium permeability. Involved in the behavioral responses to pentanol, ethyl acetate, and propyl acetate. The polypeptide is Odorant receptor 83a (Or83a) (Drosophila melanogaster (Fruit fly)).